The primary structure comprises 201 residues: Regulator of G-protein signaling 1 (201 aa).

Residues 75-191 (SLEKLLISED…LKSEIFLRLA (117 aa)) enclose the RGS domain.

It is found in the cell membrane. The protein localises to the cytoplasm. The protein resides in the cytosol. Its function is as follows. Regulates G protein-coupled receptor signaling cascades, including signaling downstream of the N-formylpeptide chemoattractant receptors and leukotriene receptors. Inhibits B cell chemotaxis. Inhibits signal transduction by increasing the GTPase activity of G protein alpha subunits, thereby driving them into their inactive GDP-bound form. In Xenopus tropicalis (Western clawed frog), this protein is Regulator of G-protein signaling 1 (rgs1).